The following is a 495-amino-acid chain: Formin-like protein 17 (495 aa).

Residues 1–92 are disordered; the sequence is MDIRELIDIT…HNLKGQGQTR (92 aa). The span at 19–29 shows a compositional bias: pro residues; sequence GPPPPPPPPLL. Positions 30–39 are enriched in low complexity; sequence QPHHSALSSS. Residues 86-486 form the FH2 domain; it reads KGQGQTRKAN…RAQKEAENEK (401 aa).

This sequence belongs to the formin-like family. Class-II subfamily.

The sequence is that of Formin-like protein 17 (FH17) from Arabidopsis thaliana (Mouse-ear cress).